Consider the following 286-residue polypeptide: 4-hydroxybenzoate octaprenyltransferase (286 aa).

Transmembrane regions (helical) follow at residues 20 to 40 (IGTL…AGGM), 43 to 63 (LKVL…GCII), 95 to 115 (ILFA…NPLV), 142 to 162 (FLGV…TGEV), 167 to 187 (WWLF…YAMV), 210 to 230 (QIIG…GWAA), and 234 to 254 (LVYG…QKLI).

The protein belongs to the UbiA prenyltransferase family. Mg(2+) serves as cofactor.

The protein resides in the cell inner membrane. It catalyses the reaction all-trans-octaprenyl diphosphate + 4-hydroxybenzoate = 4-hydroxy-3-(all-trans-octaprenyl)benzoate + diphosphate. Its pathway is cofactor biosynthesis; ubiquinone biosynthesis. Catalyzes the prenylation of para-hydroxybenzoate (PHB) with an all-trans polyprenyl group. Mediates the second step in the final reaction sequence of ubiquinone-8 (UQ-8) biosynthesis, which is the condensation of the polyisoprenoid side chain with PHB, generating the first membrane-bound Q intermediate 3-octaprenyl-4-hydroxybenzoate. The sequence is that of 4-hydroxybenzoate octaprenyltransferase from Shewanella sediminis (strain HAW-EB3).